A 198-amino-acid chain; its full sequence is GTP cyclohydrolase-2 (198 aa).

GTP is bound at residue 52-56 (RMHSE). Zn(2+) contacts are provided by cysteine 57, cysteine 68, and cysteine 70. Residues glutamine 73, 94 to 96 (EGR), and threonine 116 contribute to the GTP site. Aspartate 128 acts as the Proton acceptor in catalysis. Residue arginine 130 is the Nucleophile of the active site. GTP is bound by residues threonine 151 and lysine 156.

It belongs to the GTP cyclohydrolase II family. Zn(2+) is required as a cofactor.

It carries out the reaction GTP + 4 H2O = 2,5-diamino-6-hydroxy-4-(5-phosphoribosylamino)-pyrimidine + formate + 2 phosphate + 3 H(+). It functions in the pathway cofactor biosynthesis; riboflavin biosynthesis; 5-amino-6-(D-ribitylamino)uracil from GTP: step 1/4. In terms of biological role, catalyzes the conversion of GTP to 2,5-diamino-6-ribosylamino-4(3H)-pyrimidinone 5'-phosphate (DARP), formate and pyrophosphate. The sequence is that of GTP cyclohydrolase-2 from Vibrio vulnificus (strain CMCP6).